A 327-amino-acid chain; its full sequence is Cytochrome P450 2C42 (327 aa).

Heme is bound at residue cysteine 272.

It belongs to the cytochrome P450 family. Heme serves as cofactor.

The protein localises to the endoplasmic reticulum membrane. Its subcellular location is the microsome membrane. It catalyses the reaction an organic molecule + reduced [NADPH--hemoprotein reductase] + O2 = an alcohol + oxidized [NADPH--hemoprotein reductase] + H2O + H(+). Cytochromes P450 are a group of heme-thiolate monooxygenases. In liver microsomes, this enzyme is involved in an NADPH-dependent electron transport pathway. It oxidizes a variety of structurally unrelated compounds, including steroids, fatty acids, and xenobiotics. This is Cytochrome P450 2C42 (CYP2C42) from Sus scrofa (Pig).